Consider the following 207-residue polypeptide: Dephospho-CoA kinase (207 aa).

Residues 1-11 (MTRSPAPSSPT) are compositionally biased toward polar residues. Residues 1–21 (MTRSPAPSSPTHPRRLGLTGS) form a disordered region. Positions 15–207 (RLGLTGSIGA…DAALRQLEIT (193 aa)) constitute a DPCK domain. Residue 23–28 (GAGKST) participates in ATP binding.

The protein belongs to the CoaE family.

Its subcellular location is the cytoplasm. The catalysed reaction is 3'-dephospho-CoA + ATP = ADP + CoA + H(+). Its pathway is cofactor biosynthesis; coenzyme A biosynthesis; CoA from (R)-pantothenate: step 5/5. Functionally, catalyzes the phosphorylation of the 3'-hydroxyl group of dephosphocoenzyme A to form coenzyme A. In Deinococcus radiodurans (strain ATCC 13939 / DSM 20539 / JCM 16871 / CCUG 27074 / LMG 4051 / NBRC 15346 / NCIMB 9279 / VKM B-1422 / R1), this protein is Dephospho-CoA kinase.